A 361-amino-acid chain; its full sequence is Chorismate synthase (361 aa).

Arg-48 is an NADP(+) binding site. Residues 125–127 (RSS), 238–239 (NA), Gly-278, 293–297 (KPTSS), and Arg-319 contribute to the FMN site.

The protein belongs to the chorismate synthase family. In terms of assembly, homotetramer. FMNH2 is required as a cofactor.

The enzyme catalyses 5-O-(1-carboxyvinyl)-3-phosphoshikimate = chorismate + phosphate. Its pathway is metabolic intermediate biosynthesis; chorismate biosynthesis; chorismate from D-erythrose 4-phosphate and phosphoenolpyruvate: step 7/7. In terms of biological role, catalyzes the anti-1,4-elimination of the C-3 phosphate and the C-6 proR hydrogen from 5-enolpyruvylshikimate-3-phosphate (EPSP) to yield chorismate, which is the branch point compound that serves as the starting substrate for the three terminal pathways of aromatic amino acid biosynthesis. This reaction introduces a second double bond into the aromatic ring system. In Vibrio anguillarum (strain ATCC 68554 / 775) (Listonella anguillarum), this protein is Chorismate synthase.